The chain runs to 458 residues: Chromosomal replication initiator protein DnaA (458 aa).

The interval 1–93 (MKTELSEVWQ…NVIEDPAAEP (93 aa)) is domain I, interacts with DnaA modulators. The domain II stretch occupies residues 94–119 (VDAPNVADLPAGTSAPAAEQNARLLG). The tract at residues 120 to 336 (YINPKYTFET…GALTRVVAYA (217 aa)) is domain III, AAA+ region. Residues Gly-164, Gly-166, Lys-167, and Thr-168 each coordinate ATP. Positions 337–458 (NMLKCPLTYD…EQLIARIRAE (122 aa)) are domain IV, binds dsDNA.

It belongs to the DnaA family. In terms of assembly, oligomerizes as a right-handed, spiral filament on DNA at oriC.

Its subcellular location is the cytoplasm. In terms of biological role, plays an essential role in the initiation and regulation of chromosomal replication. ATP-DnaA binds to the origin of replication (oriC) to initiate formation of the DNA replication initiation complex once per cell cycle. Binds the DnaA box (a 9 base pair repeat at the origin) and separates the double-stranded (ds)DNA. Forms a right-handed helical filament on oriC DNA; dsDNA binds to the exterior of the filament while single-stranded (ss)DNA is stabiized in the filament's interior. The ATP-DnaA-oriC complex binds and stabilizes one strand of the AT-rich DNA unwinding element (DUE), permitting loading of DNA polymerase. After initiation quickly degrades to an ADP-DnaA complex that is not apt for DNA replication. Binds acidic phospholipids. The chain is Chromosomal replication initiator protein DnaA from Symbiobacterium thermophilum (strain DSM 24528 / JCM 14929 / IAM 14863 / T).